A 399-amino-acid polypeptide reads, in one-letter code: All trans-polyprenyl-diphosphate synthase PDSS2 (399 aa).

Belongs to the FPP/GGPP synthase family. Heterotetramer composed of 2 PDSS1/DPS1 and 2 PDSS2/DLP1 subunits.

It localises to the mitochondrion. It carries out the reaction 7 isopentenyl diphosphate + (2E,6E)-farnesyl diphosphate = all-trans-decaprenyl diphosphate + 7 diphosphate. The enzyme catalyses 6 isopentenyl diphosphate + (2E,6E)-farnesyl diphosphate = all-trans-nonaprenyl diphosphate + 6 diphosphate. Its pathway is cofactor biosynthesis; ubiquinone biosynthesis. Functionally, heterotetrameric enzyme that catalyzes the condensation of farnesyl diphosphate (FPP), which acts as a primer, and isopentenyl diphosphate (IPP) to produce prenyl diphosphates of varying chain lengths and participates in the determination of the side chain of ubiquinone. Supplies nona and decaprenyl diphosphate, the precursors for the side chain of the isoprenoid quinones ubiquinone-9 (Q9) and ubiquinone-10 (Q10) respectively. The enzyme adds isopentenyl diphosphate molecules sequentially to farnesyl diphosphate with trans stereochemistry. May play a role during cerebellar development. May regulate mitochondrial respiratory chain function. The protein is All trans-polyprenyl-diphosphate synthase PDSS2 of Homo sapiens (Human).